The chain runs to 125 residues: Large ribosomal subunit protein bL12 (125 aa).

Belongs to the bacterial ribosomal protein bL12 family. As to quaternary structure, homodimer. Part of the 50S ribosomal subunit; present in 6 copies per ribosome. Forms part of the ribosomal stalk which helps the ribosome interact with GTP-bound translation factors. Forms a heptameric L10(L12)2(L12)2(L12)2 complex, where L10 forms an elongated spine to which 3 L12 dimers bind in a sequential fashion.

In terms of biological role, forms part of the ribosomal stalk which helps the ribosome interact with GTP-bound translation factors. Is thus essential for accurate translation. This chain is Large ribosomal subunit protein bL12, found in Agrobacterium fabrum (strain C58 / ATCC 33970) (Agrobacterium tumefaciens (strain C58)).